A 138-amino-acid polypeptide reads, in one-letter code: Putative nickel-responsive regulator (138 aa).

Ni(2+)-binding residues include histidine 78, histidine 89, histidine 91, and cysteine 97.

Belongs to the transcriptional regulatory CopG/NikR family. Ni(2+) is required as a cofactor.

Functionally, transcriptional regulator. The sequence is that of Putative nickel-responsive regulator from Pyrococcus furiosus (strain ATCC 43587 / DSM 3638 / JCM 8422 / Vc1).